Here is a 119-residue protein sequence, read N- to C-terminus: Protein TusC (119 aa).

This sequence belongs to the DsrF/TusC family. In terms of assembly, heterohexamer, formed by a dimer of trimers. The hexameric TusBCD complex contains 2 copies each of TusB, TusC and TusD. The TusBCD complex interacts with TusE.

The protein localises to the cytoplasm. Its function is as follows. Part of a sulfur-relay system required for 2-thiolation of 5-methylaminomethyl-2-thiouridine (mnm(5)s(2)U) at tRNA wobble positions. This chain is Protein TusC, found in Shigella boydii serotype 18 (strain CDC 3083-94 / BS512).